The sequence spans 856 residues: DNA endonuclease RBBP8 (856 aa).

The interval Glu-25 to Leu-48 is essential for binding to the MRN complex and for RPA focus formation on DNA damage. 2 coiled-coil regions span residues Leu-38–Leu-87 and Ile-120–Leu-141. 2 disordered regions span residues Asp-143 to Leu-174 and Asp-423 to Asn-456. The span at Glu-156–Val-168 shows a compositional bias: acidic residues. Residues Ser-493–His-515 are damage-recruitment motif. Residues Ser-695–Gln-732 are disordered. Residues Cys-702–Gln-730 are compositionally biased toward basic and acidic residues. Thr-806 bears the Phosphothreonine mark. Phosphothreonine; by ATR is present on Thr-818.

This sequence belongs to the COM1/SAE2/CtIP family. As to quaternary structure, homotetramer; formed by antiparallel association of helical extensions protruding from the N-termini of two parallel coiled-coil dimers. Interacts with the MRN complex; the interaction links DNA sensing to resection. Interacts with samhd1. Post-translationally, phosphorylation at Thr-818 by atr promotes recruitment to double-strand breaks (DSBs).

The protein resides in the nucleus. The protein localises to the chromosome. Its function is as follows. Endonuclease that cooperates with the MRE11-RAD50-NBN (MRN) complex in DNA-end resection, the first step of double-strand break (DSB) repair through the homologous recombination (HR) pathway. Functions downstream of the MRN complex and ATM, promotes ATR activation and its recruitment to DSBs in the S/G2 phase facilitating the generation of ssDNA. Specifically promotes the endonuclease activity of the MRN complex to clear DNA ends containing protein adducts: recruited to DSBs by nbn following phosphorylation, and promotes the endonuclease of mre11 to clear protein-DNA adducts and generate clean double-strand break ends. The MRN complex and rbbp8/CtIP are also required for chromosome alignment during metaphase. This is DNA endonuclease RBBP8 (rbbp8) from Xenopus laevis (African clawed frog).